We begin with the raw amino-acid sequence, 120 residues long: Glycine cleavage system H protein (120 aa).

The Lipoyl-binding domain occupies 17-99 (VATVGITEHA…QGAAWFFKLK (83 aa)). K58 is subject to N6-lipoyllysine.

This sequence belongs to the GcvH family. As to quaternary structure, the glycine cleavage system is composed of four proteins: P, T, L and H. Requires (R)-lipoate as cofactor.

The glycine cleavage system catalyzes the degradation of glycine. The H protein shuttles the methylamine group of glycine from the P protein to the T protein. This chain is Glycine cleavage system H protein, found in Sinorhizobium fredii (strain NBRC 101917 / NGR234).